The chain runs to 478 residues: Geranial dehydrogenase (478 aa).

An NAD(+)-binding site is contributed by glycine 230–glycine 235. Glutamate 252 functions as the Proton acceptor in the catalytic mechanism. Cysteine 286 functions as the Nucleophile in the catalytic mechanism.

Belongs to the aldehyde dehydrogenase family.

It carries out the reaction (2E)-geranial + NAD(+) + H2O = geranate + NADH + 2 H(+). It catalyses the reaction perillyl aldehyde + NAD(+) + H2O = perillate + NADH + 2 H(+). The protein operates within terpene metabolism; monoterpene degradation. In terms of biological role, involved in the degradation of the monoterpenes beta-myrcene and limonene. During anaerobic degradation of beta-myrcene, catalyzes the NAD(+)-dependent oxidation of geranial to geranic acid. Seems to be specific for the trans-isomer geranial, since it does not act on the cis-isomer neral. During degradation of limonene, catalyzes the NAD(+)-dependent conversion of perillyl aldehyde to perrilic acid. This chain is Geranial dehydrogenase, found in Castellaniella defragrans (strain DSM 12143 / CCUG 39792 / 65Phen) (Alcaligenes defragrans).